A 306-amino-acid polypeptide reads, in one-letter code: Ornithine carbamoyltransferase (306 aa).

Residues 53 to 56 (STRT), Gln-80, Arg-104, and 131 to 134 (HPCQ) each bind carbamoyl phosphate. L-ornithine is bound by residues Asn-162, Asp-219, and 223 to 224 (SM). Carbamoyl phosphate-binding positions include 259–260 (CL) and Arg-287.

Belongs to the aspartate/ornithine carbamoyltransferase superfamily. OTCase family.

It is found in the cytoplasm. The catalysed reaction is carbamoyl phosphate + L-ornithine = L-citrulline + phosphate + H(+). Its pathway is amino-acid degradation; L-arginine degradation via ADI pathway; carbamoyl phosphate from L-arginine: step 2/2. Functionally, reversibly catalyzes the transfer of the carbamoyl group from carbamoyl phosphate (CP) to the N(epsilon) atom of ornithine (ORN) to produce L-citrulline. The polypeptide is Ornithine carbamoyltransferase (Acinetobacter baumannii (strain AYE)).